Consider the following 309-residue polypeptide: Tagatose-6-phosphate kinase (309 aa).

It belongs to the carbohydrate kinase PfkB family. LacC subfamily.

It catalyses the reaction D-tagatofuranose 6-phosphate + ATP = D-tagatofuranose 1,6-bisphosphate + ADP + H(+). It participates in carbohydrate metabolism; D-tagatose 6-phosphate degradation; D-glyceraldehyde 3-phosphate and glycerone phosphate from D-tagatose 6-phosphate: step 1/2. The sequence is that of Tagatose-6-phosphate kinase from Streptococcus pyogenes serotype M2 (strain MGAS10270).